A 478-amino-acid chain; its full sequence is ATP synthase subunit beta (478 aa).

Position 151–158 (151–158) interacts with ATP; that stretch reads GGAGVGKT.

It belongs to the ATPase alpha/beta chains family. F-type ATPases have 2 components, CF(1) - the catalytic core - and CF(0) - the membrane proton channel. CF(1) has five subunits: alpha(3), beta(3), gamma(1), delta(1), epsilon(1). CF(0) has three main subunits: a(1), b(2) and c(9-12). The alpha and beta chains form an alternating ring which encloses part of the gamma chain. CF(1) is attached to CF(0) by a central stalk formed by the gamma and epsilon chains, while a peripheral stalk is formed by the delta and b chains.

The protein resides in the cell inner membrane. It carries out the reaction ATP + H2O + 4 H(+)(in) = ADP + phosphate + 5 H(+)(out). Produces ATP from ADP in the presence of a proton gradient across the membrane. The catalytic sites are hosted primarily by the beta subunits. The chain is ATP synthase subunit beta from Xanthobacter autotrophicus (strain ATCC BAA-1158 / Py2).